Consider the following 274-residue polypeptide: Prolyl 4-hydroxylase 13 (274 aa).

At 1–10 (MRSYGKEKKL) the chain is on the cytoplasmic side. The chain crosses the membrane as a helical; Signal-anchor for type II membrane protein span at residues 11–31 (VFPYVFIACCFFLAIFGFCFF). Residues 32–274 (NLFSQGISFS…TKWIRDQTYD (243 aa)) are Lumenal-facing. The region spanning 151–270 (YYESFNILRY…KWVATKWIRD (120 aa)) is the Fe2OG dioxygenase domain. 2 residues coordinate Fe cation: His-169 and Asp-171. N-linked (GlcNAc...) asparagine glycosylation is present at Asn-242. His-251 serves as a coordination point for Fe cation. Lys-261 is a binding site for 2-oxoglutarate.

Belongs to the P4HA family. Requires Fe(2+) as cofactor. L-ascorbate is required as a cofactor. As to expression, expressed in epidermal root hair cells (trichoblasts) root hairless cells (atrichoblasts).

The protein resides in the endoplasmic reticulum membrane. It catalyses the reaction L-prolyl-[collagen] + 2-oxoglutarate + O2 = trans-4-hydroxy-L-prolyl-[collagen] + succinate + CO2. Catalyzes the post-translational formation of 4-hydroxyproline in -Xaa-Pro-Gly- sequences in proline-rich peptide sequences of plant glycoproteins and other proteins. Hydroxyprolines are important constituent of many plant cell wall glycoproteins such as extensins, hydroxyproline-rich glycoproteins, lectins and arabinogalactan proteins. Possesses high affinity for leucine-rich repeat and proline-rich extensins of root cell walls that are essential for root hair development. Hydroxyprolines define the subsequent O-glycosylation sites by arabinosyltransferases which elongate the O-arabinosides on extensins. In Arabidopsis thaliana (Mouse-ear cress), this protein is Prolyl 4-hydroxylase 13.